A 179-amino-acid polypeptide reads, in one-letter code: UPF0227 protein Shewana3_2292 (179 aa).

Belongs to the UPF0227 family.

In Shewanella sp. (strain ANA-3), this protein is UPF0227 protein Shewana3_2292.